The following is a 358-amino-acid chain: Type II restriction enzyme SacI (358 aa).

The catalysed reaction is Endonucleolytic cleavage of DNA to give specific double-stranded fragments with terminal 5'-phosphates.. Functionally, a subtype P restriction enzyme that recognizes the double-stranded sequence 5'-GAGCTC-3' and cleaves after T-5. The protein is Type II restriction enzyme SacI of Streptomyces achromogenes.